The primary structure comprises 774 residues: Ion-translocating oxidoreductase complex subunit C (774 aa).

4Fe-4S ferredoxin-type domains follow at residues 359-389 and 399-428; these read ELPEPVPAMPCIRCGDCAQVCPVSLLPQQLH and QLLAHNLFDCIECGACAYVCPSSIPLVQYY. The [4Fe-4S] cluster site is built by Cys369, Cys372, Cys375, Cys379, Cys408, Cys411, Cys414, and Cys418. The span at 453–490 shows a compositional bias: basic and acidic residues; that stretch reads EQRQARLRRDEERRAAERAQRAEKAALARAAQAEREEA. The interval 453 to 493 is disordered; it reads EQRQARLRRDEERRAAERAQRAEKAALARAAQAEREEAAPA.

Belongs to the 4Fe4S bacterial-type ferredoxin family. RnfC subfamily. In terms of assembly, the complex is composed of six subunits: RnfA, RnfB, RnfC, RnfD, RnfE and RnfG. The cofactor is [4Fe-4S] cluster.

Its subcellular location is the cell inner membrane. Functionally, part of a membrane-bound complex that couples electron transfer with translocation of ions across the membrane. The protein is Ion-translocating oxidoreductase complex subunit C of Pseudomonas aeruginosa (strain ATCC 15692 / DSM 22644 / CIP 104116 / JCM 14847 / LMG 12228 / 1C / PRS 101 / PAO1).